The sequence spans 1429 residues: uncharacterized protein (1429 aa).

Disordered regions lie at residues 1-76 (MEGE…SGIE) and 103-130 (PAGA…AGEK). Positions 14–29 (SHSTSVVSERASSSGV) are enriched in low complexity. Residues 109 to 121 (SAQNANLISSKSE) show a composition bias toward polar residues. 2 helical membrane-spanning segments follow: residues 197–217 (LTGQ…LSWI) and 225–245 (FFIL…CMIS). An SMP-LTD domain is found at 266 to 471 (DYETMSWFNT…WPNMFDYDLS (206 aa)). 2 C2 domains span residues 462-584 (WPNM…GDIY) and 738-858 (TPVD…DRSA). The segment at 899 to 932 (NTDNSSKQSSENVQSATDPTTPAKDNSTSNAETS) is disordered. The 118-residue stretch at 1060–1177 (TYMPVPMTLN…EPNVESQQSI (118 aa)) folds into the C2 3 domain. The interval 1280–1303 (EKNPSRSDLTTTQEASSSASVPPA) is disordered. The span at 1294 to 1303 (ASSSASVPPA) shows a compositional bias: low complexity.

It is found in the membrane. This is an uncharacterized protein from Schizosaccharomyces pombe (strain 972 / ATCC 24843) (Fission yeast).